Here is a 507-residue protein sequence, read N- to C-terminus: Cuticlin-4 (507 aa).

A signal peptide spans 1 to 19 (MFHFTRILAAFLLPTLCFC). At 20–471 (GYSTAPSSTV…KTCFSTSRMY (452 aa)) the chain is on the extracellular side. The region spanning 42–280 (VCETASISLL…YGCSNTQPQC (239 aa)) is the ZP domain. The segment at 292–350 (KTTETAEPYPYDSHESGYPTRPANYPVASSRYPIPTTQAPASYPSSPAPPPPGADIDNG) is disordered. N-linked (GlcNAc...) asparagine glycans are attached at residues Asn374 and Asn408. The helical transmembrane segment at 472-492 (FTLILLCLLFATTVVVFIVIV) threads the bilayer. Topologically, residues 493–507 (QKQRQILAQTAFFKP) are cytoplasmic.

The protein resides in the cell membrane. Functionally, plays a role in alae formation and subsequent cuticle attachment in adults. The polypeptide is Cuticlin-4 (Caenorhabditis elegans).